The primary structure comprises 473 residues: Glutamine synthetase (473 aa).

In terms of domain architecture, GS beta-grasp spans 15-100 (ENIKIIDLKF…ICSIKEPRTG (86 aa)). The 367-residue stretch at 107 to 473 (PRTIAAKAVE…PYEFSLYYDC (367 aa)) folds into the GS catalytic domain. Glutamate 132 contributes to the Mn(2+) binding site. Glutamate 134 is a binding site for Mg(2+). Residue glutamate 210 participates in ATP binding. Mg(2+) contacts are provided by glutamate 215 and glutamate 223. L-glutamate is bound by residues 267–268 (NG) and glycine 268. Histidine 272 serves as a coordination point for Mg(2+). ATP contacts are provided by residues 274 to 276 (HQS) and serine 276. 3 residues coordinate L-glutamate: arginine 324, glutamate 330, and arginine 342. The ATP site is built by arginine 342, arginine 347, and lysine 356. A Mn(2+)-binding site is contributed by glutamate 361. An L-glutamate-binding site is contributed by arginine 363. Tyrosine 401 carries the O-AMP-tyrosine modification.

The protein belongs to the glutamine synthetase family. As to quaternary structure, oligomer of 12 subunits arranged in the form of two hexagons. Mg(2+) serves as cofactor.

It is found in the cytoplasm. It catalyses the reaction L-glutamate + NH4(+) + ATP = L-glutamine + ADP + phosphate + H(+). With respect to regulation, inhibited by ADP (90%), AMP (80%), alanine (52%) and aspartate (41%). The activity of this enzyme could be controlled by adenylation under conditions of abundant glutamine. Its function is as follows. Involved in nitrogen metabolism via ammonium assimilation. Catalyzes the ATP-dependent biosynthesis of glutamine from glutamate and ammonia. This is Glutamine synthetase from Synechocystis sp. (strain ATCC 27184 / PCC 6803 / Kazusa).